A 91-amino-acid polypeptide reads, in one-letter code: Large ribosomal subunit protein uL22 (91 aa).

Belongs to the universal ribosomal protein uL22 family. In terms of assembly, part of the 50S ribosomal subunit.

Its function is as follows. This protein binds specifically to 23S rRNA; its binding is stimulated by other ribosomal proteins, e.g. L4, L17, and L20. It is important during the early stages of 50S assembly. It makes multiple contacts with different domains of the 23S rRNA in the assembled 50S subunit and ribosome. In terms of biological role, the globular domain of the protein is located near the polypeptide exit tunnel on the outside of the subunit, while an extended beta-hairpin is found that lines the wall of the exit tunnel in the center of the 70S ribosome. The sequence is that of Large ribosomal subunit protein uL22 (rplV) from Ash yellows phytoplasma.